An 854-amino-acid polypeptide reads, in one-letter code: Envelope glycoprotein gp150 (854 aa).

Topologically, residues 1–783 (MAEGFAANRQ…WIGKIPQYLK (783 aa)) are extracellular. N220, N258, N269, N274, N298, N330, N336, N342, N418, N422, N448, N469, N481, N499, N518, N531, N548, and N551 each carry an N-linked (GlcNAc...) asparagine; by host glycan. The segment at 614–634 (IMLALATVLSIAGAGTGATAI) is fusion peptide. A coiled-coil region spans residues 641–691 (QQVLATHQEALDKITEALKINNLRLVTLEHQMLVIGLKVEAIEKFLYTAFA). The interval 660 to 678 (INNLRLVTLEHQMLVIGLK) is immunosuppression. N-linked (GlcNAc...) asparagine; by host glycans are attached at residues N715, N719, N727, and N735. Positions 734–770 (YNQTKYLQQKFYEIIMDIEQNNVQGKQGLQKLQNWQD) form a coiled coil. A helical membrane pass occupies residues 784–804 (GLLGGILGIGLGILLLILCLP). Residues 805–854 (TLVDCIRNCISKVLGYTVIAMPEIDDEEETVQMELRKNGRQCGMSEKEEE) lie on the Cytoplasmic side of the membrane.

As to quaternary structure, the mature envelope protein (Env) consists of a trimer of SU-TM heterodimers attached by non-covalent interactions or by a labile interchain disulfide bond. Post-translationally, specific enzymatic cleavages in vivo yield mature proteins. Envelope glycoproteins are synthesized as an inactive precursor that is N-glycosylated and processed likely by host cell furin or by a furin-like protease in the Golgi to yield the mature SU and TM proteins. The cleavage site between SU and TM requires the minimal sequence [KR]-X-[KR]-R.

It localises to the virion membrane. Its subcellular location is the host cell membrane. Its function is as follows. The surface protein (SU) attaches the virus to the host cell by binding to its receptor. This interaction triggers the refolding of the transmembrane protein (TM) and is thought to activate its fusogenic potential by unmasking its fusion peptide. Fusion occurs at the host cell plasma membrane. In terms of biological role, the transmembrane protein (TM) acts as a class I viral fusion protein. Under the current model, the protein has at least 3 conformational states: pre-fusion native state, pre-hairpin intermediate state, and post-fusion hairpin state. During viral and target cell membrane fusion, the coiled coil regions (heptad repeats) assume a trimer-of-hairpins structure, positioning the fusion peptide in close proximity to the C-terminal region of the ectodomain. The formation of this structure appears to drive apposition and subsequent fusion of viral and target cell membranes. Membranes fusion leads to delivery of the nucleocapsid into the cytoplasm. This Feline immunodeficiency virus (strain San Diego) (FIV) protein is Envelope glycoprotein gp150 (env).